A 271-amino-acid chain; its full sequence is Formamidopyrimidine-DNA glycosylase (271 aa).

The active-site Schiff-base intermediate with DNA is Pro-2. Glu-3 acts as the Proton donor in catalysis. The active-site Proton donor; for beta-elimination activity is the Lys-58. DNA contacts are provided by His-92, Arg-111, and Lys-152. The segment at Tyr-237 to Asn-271 adopts an FPG-type zinc-finger fold. Arg-261 acts as the Proton donor; for delta-elimination activity in catalysis.

Belongs to the FPG family. Monomer. It depends on Zn(2+) as a cofactor.

It catalyses the reaction Hydrolysis of DNA containing ring-opened 7-methylguanine residues, releasing 2,6-diamino-4-hydroxy-5-(N-methyl)formamidopyrimidine.. The catalysed reaction is 2'-deoxyribonucleotide-(2'-deoxyribose 5'-phosphate)-2'-deoxyribonucleotide-DNA = a 3'-end 2'-deoxyribonucleotide-(2,3-dehydro-2,3-deoxyribose 5'-phosphate)-DNA + a 5'-end 5'-phospho-2'-deoxyribonucleoside-DNA + H(+). Involved in base excision repair of DNA damaged by oxidation or by mutagenic agents. Acts as a DNA glycosylase that recognizes and removes damaged bases. Has a preference for oxidized purines, such as 7,8-dihydro-8-oxoguanine (8-oxoG). Has AP (apurinic/apyrimidinic) lyase activity and introduces nicks in the DNA strand. Cleaves the DNA backbone by beta-delta elimination to generate a single-strand break at the site of the removed base with both 3'- and 5'-phosphates. The chain is Formamidopyrimidine-DNA glycosylase from Wolbachia sp. subsp. Brugia malayi (strain TRS).